Consider the following 152-residue polypeptide: MEVRVFEGEFKGDGLSMAIVVARFNDLLTDELLSGAIDCFERHGVERVDVFKVPGSFEIPIIAKKLAESGKYDAILALGVVVRGETKHFDLVANEVSKGVAQAGLITGVPVIFGVIAVEDELQGLNRAGIKSNKGFEYAMAALEMANLMKKL.

Residues Phe24, 56–58 (SFE), and 80–82 (VVV) contribute to the 5-amino-6-(D-ribitylamino)uracil site. (2S)-2-hydroxy-3-oxobutyl phosphate is bound at residue 85 to 86 (ET). Residue His88 is the Proton donor of the active site. Phe113 lines the 5-amino-6-(D-ribitylamino)uracil pocket. Arg127 lines the (2S)-2-hydroxy-3-oxobutyl phosphate pocket.

This sequence belongs to the DMRL synthase family.

It carries out the reaction (2S)-2-hydroxy-3-oxobutyl phosphate + 5-amino-6-(D-ribitylamino)uracil = 6,7-dimethyl-8-(1-D-ribityl)lumazine + phosphate + 2 H2O + H(+). It participates in cofactor biosynthesis; riboflavin biosynthesis; riboflavin from 2-hydroxy-3-oxobutyl phosphate and 5-amino-6-(D-ribitylamino)uracil: step 1/2. Functionally, catalyzes the formation of 6,7-dimethyl-8-ribityllumazine by condensation of 5-amino-6-(D-ribitylamino)uracil with 3,4-dihydroxy-2-butanone 4-phosphate. This is the penultimate step in the biosynthesis of riboflavin. This is 6,7-dimethyl-8-ribityllumazine synthase from Thermococcus onnurineus (strain NA1).